Consider the following 451-residue polypeptide: Vacuolar cation/proton exchanger 1a (451 aa).

At 1–58 (MEAAAAMEAGRKLAARHPHGRSRTAHNMSSSSLRKKSDAALVRKVPVAPLRPLLANLQ) the chain is on the cytoplasmic side. The segment at 9–37 (AGRKLAARHPHGRSRTAHNMSSSSLRKKS) is disordered. Residues 13-24 (LAARHPHGRSRT) are compositionally biased toward basic residues. Residues 59–79 (EVFLATKLAVLFPAVPLAIAA) traverse the membrane as a helical segment. At 80–86 (QCFRFDQ) the chain is on the vacuolar side. Residues 87 to 107 (VWVFALSLLGLIPLAERVSFL) traverse the membrane as a helical segment. The Cytoplasmic portion of the chain corresponds to 108–120 (TEQIALYTGPTVG). Residues 121 to 141 (GLLNATCGNATELIIALFALL) traverse the membrane as a helical segment. Positions 128 to 163 (GNATELIIALFALLKGKIEVVKCSLLGSVLSNLLLV) are cation selection. The Vacuolar segment spans residues 142-153 (KGKIEVVKCSLL). Residues 154–174 (GSVLSNLLLVLGTSLFCGGVV) traverse the membrane as a helical segment. The Cytoplasmic segment spans residues 175–191 (NLGARQPYDRNQSDVST). The chain crosses the membrane as a helical span at residues 192–212 (ALLFLAVLCHSAPLLLRYAVA). The Vacuolar segment spans residues 213 to 228 (AGEHSVSATSAAASLD). The chain crosses the membrane as a helical span at residues 229–249 (LSRACSFVMLASYVAYLFFQL). The Cytoplasmic segment spans residues 250–273 (KTHRQLFEPQEVDGGDAGDDDEEP). A helical transmembrane segment spans residues 274–294 (ALGFASALFWLALMTAVISVL). Topologically, residues 295 to 317 (SEYVVGTIEPTSQSWGLSVSFIS) are vacuolar. A helical transmembrane segment spans residues 318–338 (IILLPIVGNAAEHAGAIIFAL). The interval 325-360 (GNAAEHAGAIIFALKNKLDITLGVALGSATQISMFV) is cation selection. Topologically, residues 339 to 352 (KNKLDITLGVALGS) are cytoplasmic. A helical membrane pass occupies residues 353 to 373 (ATQISMFVVPLSVLVAWIMGV). Topologically, residues 374-378 (QMDLD) are vacuolar. A helical transmembrane segment spans residues 379 to 399 (FKLLETGSLFMAVLVTAFTLQ). Over 400 to 404 (DGTSH) the chain is Cytoplasmic. A helical transmembrane segment spans residues 405–425 (YLKGILLLLCYIVIGACFFVA). Residues 426–451 (RQPAGHANSNGALLDVPTGSMSVQAA) are Vacuolar-facing.

Belongs to the Ca(2+):cation antiporter (CaCA) (TC 2.A.19) family. Cation/proton exchanger (CAX) subfamily. As to expression, ubiquitous.

It is found in the vacuole membrane. Vacuolar cation/proton exchanger (CAX). Translocates Ca(2+) and other metal ions into vacuoles using the proton gradient formed by H(+)-ATPase and H(+)-pyrophosphatase. The protein is Vacuolar cation/proton exchanger 1a (CAX1a) of Oryza sativa subsp. japonica (Rice).